Reading from the N-terminus, the 344-residue chain is N-acetyl-gamma-glutamyl-phosphate reductase (344 aa).

The active site involves C150.

The protein belongs to the NAGSA dehydrogenase family. Type 1 subfamily.

The protein localises to the cytoplasm. The enzyme catalyses N-acetyl-L-glutamate 5-semialdehyde + phosphate + NADP(+) = N-acetyl-L-glutamyl 5-phosphate + NADPH + H(+). It functions in the pathway amino-acid biosynthesis; L-arginine biosynthesis; N(2)-acetyl-L-ornithine from L-glutamate: step 3/4. Functionally, catalyzes the NADPH-dependent reduction of N-acetyl-5-glutamyl phosphate to yield N-acetyl-L-glutamate 5-semialdehyde. This is N-acetyl-gamma-glutamyl-phosphate reductase from Pseudomonas entomophila (strain L48).